Reading from the N-terminus, the 293-residue chain is 33 kDa chaperonin (293 aa).

2 disulfides stabilise this stretch: cysteine 237–cysteine 239 and cysteine 271–cysteine 274.

Belongs to the HSP33 family. In terms of processing, under oxidizing conditions two disulfide bonds are formed involving the reactive cysteines. Under reducing conditions zinc is bound to the reactive cysteines and the protein is inactive.

It is found in the cytoplasm. In terms of biological role, redox regulated molecular chaperone. Protects both thermally unfolding and oxidatively damaged proteins from irreversible aggregation. Plays an important role in the bacterial defense system toward oxidative stress. The protein is 33 kDa chaperonin of Haemophilus influenzae (strain PittGG).